We begin with the raw amino-acid sequence, 332 residues long: Biotin synthase (332 aa).

In terms of domain architecture, Radical SAM core spans 53–282; it reads HFGKKVKLNM…TKEIRISGGR (230 aa). C71, C75, and C78 together coordinate [4Fe-4S] cluster. Positions 115, 147, 207, and 277 each coordinate [2Fe-2S] cluster.

Belongs to the radical SAM superfamily. Biotin synthase family. As to quaternary structure, homodimer. [4Fe-4S] cluster serves as cofactor. Requires [2Fe-2S] cluster as cofactor.

It catalyses the reaction (4R,5S)-dethiobiotin + (sulfur carrier)-SH + 2 reduced [2Fe-2S]-[ferredoxin] + 2 S-adenosyl-L-methionine = (sulfur carrier)-H + biotin + 2 5'-deoxyadenosine + 2 L-methionine + 2 oxidized [2Fe-2S]-[ferredoxin]. Its pathway is cofactor biosynthesis; biotin biosynthesis; biotin from 7,8-diaminononanoate: step 2/2. Its function is as follows. Catalyzes the conversion of dethiobiotin (DTB) to biotin by the insertion of a sulfur atom into dethiobiotin via a radical-based mechanism. In Bacillus mycoides (strain KBAB4) (Bacillus weihenstephanensis), this protein is Biotin synthase.